We begin with the raw amino-acid sequence, 378 residues long: MLTSIRHNYRLSAIITPTTAAQADTLNAGPSFGDFVAPDAPLSPAEAYEIKTVQVGPEGRKKTITRLPEWLKTPIPSNANYKKIKKDLRGLNLHTVCEEAKCPNISDCWGGSDKSAATATIMLGGDTCTRGCRFCSVKTSKAPPPLDPHEPENTAEALSRWGLGYVVLTIVDRDDLADGGARHAMETIMKIKQKAPSMLVEALVGDYAGDAEMVKLVANSGLDVFAHNVETTEALTPYVRDRRANFKQSLNVLRIAKETKPELITKTSIMLGLGETEDELWKALKDLRANDVDVVTFGQYMRPTKKHMAVHEYVTPDVFEMWRQRALDMGFLYCASGPLVRSSYKAGEAFIENVIKKRRMGRGGQVGGAQIAEMEKSA.

The [4Fe-4S] cluster site is built by Cys97, Cys102, Cys108, Cys128, Cys132, Cys135, and Ser343. The Radical SAM core domain occupies Gly111–Leu332.

The protein belongs to the radical SAM superfamily. Lipoyl synthase family. [4Fe-4S] cluster is required as a cofactor.

It is found in the mitochondrion. The catalysed reaction is [[Fe-S] cluster scaffold protein carrying a second [4Fe-4S](2+) cluster] + N(6)-octanoyl-L-lysyl-[protein] + 2 oxidized [2Fe-2S]-[ferredoxin] + 2 S-adenosyl-L-methionine + 4 H(+) = [[Fe-S] cluster scaffold protein] + N(6)-[(R)-dihydrolipoyl]-L-lysyl-[protein] + 4 Fe(3+) + 2 hydrogen sulfide + 2 5'-deoxyadenosine + 2 L-methionine + 2 reduced [2Fe-2S]-[ferredoxin]. It functions in the pathway protein modification; protein lipoylation via endogenous pathway; protein N(6)-(lipoyl)lysine from octanoyl-[acyl-carrier-protein]: step 2/2. Functionally, catalyzes the radical-mediated insertion of two sulfur atoms into the C-6 and C-8 positions of the octanoyl moiety bound to the lipoyl domains of lipoate-dependent enzymes, thereby converting the octanoylated domains into lipoylated derivatives. This Phaeosphaeria nodorum (strain SN15 / ATCC MYA-4574 / FGSC 10173) (Glume blotch fungus) protein is Lipoyl synthase, mitochondrial.